Consider the following 199-residue polypeptide: Nucleoid occlusion factor SlmA (199 aa).

In terms of domain architecture, HTH tetR-type spans 10 to 71; sequence RNRREEILQA…SLIEFIEDSL (62 aa). The segment at residues 34–53 is a DNA-binding region (H-T-H motif); sequence TTAKLAANVGVSEAALYRHF. Residues 120 to 140 are a coiled coil; that stretch reads NRLQGRINQLFERIEVQIRQV.

Belongs to the nucleoid occlusion factor SlmA family. Homodimer. Interacts with FtsZ.

It localises to the cytoplasm. The protein resides in the nucleoid. Its function is as follows. Required for nucleoid occlusion (NO) phenomenon, which prevents Z-ring formation and cell division over the nucleoid. Acts as a DNA-associated cell division inhibitor that binds simultaneously chromosomal DNA and FtsZ, and disrupts the assembly of FtsZ polymers. SlmA-DNA-binding sequences (SBS) are dispersed on non-Ter regions of the chromosome, preventing FtsZ polymerization at these regions. The sequence is that of Nucleoid occlusion factor SlmA from Photorhabdus laumondii subsp. laumondii (strain DSM 15139 / CIP 105565 / TT01) (Photorhabdus luminescens subsp. laumondii).